The primary structure comprises 346 residues: Methylthioribose-1-phosphate isomerase (346 aa).

Residues 46-48 (RGA), Arg-89, and Gln-196 each bind substrate. The active-site Proton donor is Asp-237. 247–248 (NK) contacts substrate.

The protein belongs to the eIF-2B alpha/beta/delta subunits family. MtnA subfamily.

It catalyses the reaction 5-(methylsulfanyl)-alpha-D-ribose 1-phosphate = 5-(methylsulfanyl)-D-ribulose 1-phosphate. It functions in the pathway amino-acid biosynthesis; L-methionine biosynthesis via salvage pathway; L-methionine from S-methyl-5-thio-alpha-D-ribose 1-phosphate: step 1/6. In terms of biological role, catalyzes the interconversion of methylthioribose-1-phosphate (MTR-1-P) into methylthioribulose-1-phosphate (MTRu-1-P). The chain is Methylthioribose-1-phosphate isomerase from Citrifermentans bemidjiense (strain ATCC BAA-1014 / DSM 16622 / JCM 12645 / Bem) (Geobacter bemidjiensis).